The chain runs to 276 residues: Undecaprenyl-diphosphatase 2 (276 aa).

The next 8 helical transmembrane spans lie at 1–21, 44–64, 87–107, 114–134, 150–170, 190–210, 220–240, and 251–271; these read MSLW…LFPV, QLLP…LWYF, GHLM…GLLL, VFHD…LLWV, MTFK…IPGF, AAEF…VLEL, LMDA…SVRF, and LASF…WFML.

Belongs to the UppP family.

It is found in the cell inner membrane. It catalyses the reaction di-trans,octa-cis-undecaprenyl diphosphate + H2O = di-trans,octa-cis-undecaprenyl phosphate + phosphate + H(+). Catalyzes the dephosphorylation of undecaprenyl diphosphate (UPP). Confers resistance to bacitracin. The sequence is that of Undecaprenyl-diphosphatase 2 from Burkholderia ambifaria (strain ATCC BAA-244 / DSM 16087 / CCUG 44356 / LMG 19182 / AMMD) (Burkholderia cepacia (strain AMMD)).